The following is a 166-amino-acid chain: Small ribosomal subunit protein uS9 (166 aa).

Residues 135 to 166 (KKAGFLTRDPRATERKKYGLKKARKAPQYSKR) form a disordered region. Over residues 142-151 (RDPRATERKK) the composition is skewed to basic and acidic residues. The span at 152 to 166 (YGLKKARKAPQYSKR) shows a compositional bias: basic residues.

Belongs to the universal ribosomal protein uS9 family.

This chain is Small ribosomal subunit protein uS9, found in Mycolicibacterium paratuberculosis (strain ATCC BAA-968 / K-10) (Mycobacterium paratuberculosis).